The sequence spans 268 residues: Aliphatic sulfonates import ATP-binding protein SsuB 3 (268 aa).

The tract at residues 1–27 is disordered; that stretch reads MTAAEAPLPPLAPRERTATTAAERRTG. The segment covering 13 to 26 has biased composition (basic and acidic residues); the sequence is PRERTATTAAERRT. In terms of domain architecture, ABC transporter spans 32–247; it reads VSLSGVRKSF…DRNDPEALRY (216 aa). 64 to 71 contacts ATP; it reads GPSGTGKT.

It belongs to the ABC transporter superfamily. Aliphatic sulfonates importer (TC 3.A.1.17.2) family. As to quaternary structure, the complex is composed of two ATP-binding proteins (SsuB), two transmembrane proteins (SsuC) and a solute-binding protein (SsuA).

Its subcellular location is the cell membrane. It catalyses the reaction ATP + H2O + aliphatic sulfonate-[sulfonate-binding protein]Side 1 = ADP + phosphate + aliphatic sulfonateSide 2 + [sulfonate-binding protein]Side 1.. Functionally, part of the ABC transporter complex SsuABC involved in aliphatic sulfonates import. Responsible for energy coupling to the transport system. This Rhodococcus jostii (strain RHA1) protein is Aliphatic sulfonates import ATP-binding protein SsuB 3.